A 227-amino-acid chain; its full sequence is Cytochrome c oxidase subunit 2 (227 aa).

The Mitochondrial intermembrane portion of the chain corresponds to 1-14; sequence MAYPFQLGLQDATS. The chain crosses the membrane as a helical span at residues 15-45; the sequence is PIMEELLHFHDHTLMIVFLISSLILYIISLM. The Mitochondrial matrix segment spans residues 46–59; it reads LTTKLTHTSTMDAQ. A helical membrane pass occupies residues 60 to 87; that stretch reads EVETVWTILPAIILILIALPSLRILYMM. Residues 88–227 lie on the Mitochondrial intermembrane side of the membrane; sequence DEINNPSLTV…YFETWSALMV (140 aa). Residues H161, C196, E198, C200, H204, and M207 each contribute to the Cu cation site. A Mg(2+)-binding site is contributed by E198. The residue at position 218 (Y218) is a Phosphotyrosine.

The protein belongs to the cytochrome c oxidase subunit 2 family. Component of the cytochrome c oxidase (complex IV, CIV), a multisubunit enzyme composed of 14 subunits. The complex is composed of a catalytic core of 3 subunits MT-CO1, MT-CO2 and MT-CO3, encoded in the mitochondrial DNA, and 11 supernumerary subunits COX4I, COX5A, COX5B, COX6A, COX6B, COX6C, COX7A, COX7B, COX7C, COX8 and NDUFA4, which are encoded in the nuclear genome. The complex exists as a monomer or a dimer and forms supercomplexes (SCs) in the inner mitochondrial membrane with NADH-ubiquinone oxidoreductase (complex I, CI) and ubiquinol-cytochrome c oxidoreductase (cytochrome b-c1 complex, complex III, CIII), resulting in different assemblies (supercomplex SCI(1)III(2)IV(1) and megacomplex MCI(2)III(2)IV(2)). Found in a complex with TMEM177, COA6, COX18, COX20, SCO1 and SCO2. Interacts with TMEM177 in a COX20-dependent manner. Interacts with COX20. Interacts with COX16. The cofactor is Cu cation.

The protein resides in the mitochondrion inner membrane. The enzyme catalyses 4 Fe(II)-[cytochrome c] + O2 + 8 H(+)(in) = 4 Fe(III)-[cytochrome c] + 2 H2O + 4 H(+)(out). Functionally, component of the cytochrome c oxidase, the last enzyme in the mitochondrial electron transport chain which drives oxidative phosphorylation. The respiratory chain contains 3 multisubunit complexes succinate dehydrogenase (complex II, CII), ubiquinol-cytochrome c oxidoreductase (cytochrome b-c1 complex, complex III, CIII) and cytochrome c oxidase (complex IV, CIV), that cooperate to transfer electrons derived from NADH and succinate to molecular oxygen, creating an electrochemical gradient over the inner membrane that drives transmembrane transport and the ATP synthase. Cytochrome c oxidase is the component of the respiratory chain that catalyzes the reduction of oxygen to water. Electrons originating from reduced cytochrome c in the intermembrane space (IMS) are transferred via the dinuclear copper A center (CU(A)) of subunit 2 and heme A of subunit 1 to the active site in subunit 1, a binuclear center (BNC) formed by heme A3 and copper B (CU(B)). The BNC reduces molecular oxygen to 2 water molecules using 4 electrons from cytochrome c in the IMS and 4 protons from the mitochondrial matrix. The chain is Cytochrome c oxidase subunit 2 (MT-CO2) from Canis simensis (Ethiopian wolf).